The chain runs to 391 residues: Toluene efflux pump periplasmic linker protein TtgG (391 aa).

The first 32 residues, 1–32 (MRAERWSQTVRQIRSPRALRVIPLTALMLISG), serve as a signal peptide directing secretion. Cysteine 33 carries N-palmitoyl cysteine lipidation. Residue cysteine 33 is the site of S-diacylglycerol cysteine attachment. A coiled-coil region spans residues 107–136 (RTYEAQLRRAEANRTSAQNLARRYETLLKT).

The protein belongs to the membrane fusion protein (MFP) (TC 8.A.1) family.

It localises to the cell inner membrane. Functionally, the periplasmic linker component of an organic solvent efflux pump. Involved in export of a number of organic solvents, including toluene and styrene. This is the most important solvent efflux pump in this strain, although it can export AMP and some antibiotics. The polypeptide is Toluene efflux pump periplasmic linker protein TtgG (ttgG) (Pseudomonas putida (strain DOT-T1E)).